The sequence spans 485 residues: Ribulose bisphosphate carboxylase large chain (485 aa).

Substrate-binding residues include Asn124 and Thr174. Lys176 serves as the catalytic Proton acceptor. Lys178 is a substrate binding site. Residues Lys202, Asp204, and Glu205 each coordinate Mg(2+). Lys202 is modified (N6-carboxylysine). The Proton acceptor role is filled by His294. Substrate is bound by residues Arg295, His327, and Ser379.

It belongs to the RuBisCO large chain family. Type I subfamily. Heterohexadecamer of 8 large chains and 8 small chains. The cofactor is Mg(2+).

The enzyme catalyses 2 (2R)-3-phosphoglycerate + 2 H(+) = D-ribulose 1,5-bisphosphate + CO2 + H2O. The catalysed reaction is D-ribulose 1,5-bisphosphate + O2 = 2-phosphoglycolate + (2R)-3-phosphoglycerate + 2 H(+). RuBisCO catalyzes two reactions: the carboxylation of D-ribulose 1,5-bisphosphate, the primary event in carbon dioxide fixation, as well as the oxidative fragmentation of the pentose substrate. Both reactions occur simultaneously and in competition at the same active site. The protein is Ribulose bisphosphate carboxylase large chain of Rhodopseudomonas palustris (strain ATCC BAA-98 / CGA009).